Reading from the N-terminus, the 615-residue chain is MFS-type transporter 1 (615 aa).

The tract at residues 1–85 is disordered; the sequence is MTALAAVPDL…GNNVSPHGRH (85 aa). Residues 16–53 show a composition bias toward polar residues; sequence PSTTTVHSPNYSGSPADISSSPTTRAVSRNTARQTASA. N25 carries N-linked (GlcNAc...) asparagine glycosylation. A run of 6 helical transmembrane segments spans residues 94 to 114, 138 to 158, 162 to 182, 192 to 212, 222 to 242, and 251 to 271; these read CLVI…SGIL, VYSL…HIIG, VWIT…RSAT, VLGV…TNGF, FAFQ…LGGI, and FGFY…LVVL. N-linked (GlcNAc...) asparagine glycosylation is present at N302. 8 helical membrane passes run 320 to 340, 351 to 371, 397 to 417, 432 to 452, 455 to 475, 488 to 508, 522 to 542, and 585 to 605; these read WTGT…FSVV, QNIA…LWVG, AAVF…ALYF, FLPM…LVET, VRWL…IMAL, FAML…NLII, AVFN…TAVV, and AAFW…FLGL.

This sequence belongs to the major facilitator superfamily. EmrB family.

The protein localises to the membrane. Functionally, MFS-type transporter; part of the gene cluster that mediates the biosynthesis of pyriculol and pyriculariol, two heptaketides that induce lesion formation upon application on rice leaves but are dispensable for pathogenicity. With the ABC transporter ABC7, is most likely responsible for pyriculol and pyriculariol secretion and thereby may contribute to intrinsic resistance. The sequence is that of MFS-type transporter 1 from Pyricularia oryzae (strain 70-15 / ATCC MYA-4617 / FGSC 8958) (Rice blast fungus).